The chain runs to 229 residues: Aldehyde oxidoreductase iron-sulfur-binding subunit PaoA (229 aa).

The disordered stretch occupies residues 1 to 21 (MSNQGEYPEDNRVGKHEPHDL). Positions 1–53 (MSNQGEYPEDNRVGKHEPHDLSLTRRDLIKVSAATAATAVVYPHSTLAASVPA) form a signal peptide, tat-type signal. The span at 9–21 (EDNRVGKHEPHDL) shows a compositional bias: basic and acidic residues. In terms of domain architecture, 2Fe-2S ferredoxin-type spans 61-137 (MPLTLKVNGK…GAEITTIEGL (77 aa)). 9 residues coordinate [2Fe-2S] cluster: C99, C104, G105, C107, C119, C158, C161, C208, and C210.

As to quaternary structure, heterotrimer composed of PaoA, PaoB and PaoC. The cofactor is [2Fe-2S] cluster. In terms of processing, exported by the Tat system. The position of the signal peptide cleavage has not been experimentally proven.

It localises to the periplasm. It carries out the reaction an aldehyde + A + H2O = a carboxylate + AH2 + H(+). Its activity is regulated as follows. The complex requires PaoD for activity. Functionally, oxidizes aldehydes to the corresponding carboxylic acids with a preference for aromatic aldehydes. It might play a role in the detoxification of aldehydes to avoid cell damage. The sequence is that of Aldehyde oxidoreductase iron-sulfur-binding subunit PaoA from Escherichia coli (strain K12).